Consider the following 311-residue polypeptide: Olfactory receptor 10G8 (311 aa).

Over 1–23 (MSNASLLTAFILMGLPHAPALDA) the chain is Extracellular. N-linked (GlcNAc...) asparagine glycosylation occurs at asparagine 3. A helical transmembrane segment spans residues 24-44 (PLFGVFLVVYVLTVLGNLLIL). Residues 45 to 52 (LVIRVDSH) lie on the Cytoplasmic side of the membrane. Residues 53–73 (LHTTMYYFLTNLSFIDMWFST) form a helical membrane-spanning segment. Over 74 to 98 (VTVPKLLMTLVFPSGRAISFHSCMA) the chain is Extracellular. Cysteine 96 and cysteine 188 are oxidised to a cystine. A helical transmembrane segment spans residues 99–119 (QLYFFHFLGGTECFLYRVMSC). Residues 120-138 (DRYLAISYPLRYTSMMTGR) lie on the Cytoplasmic side of the membrane. A helical membrane pass occupies residues 139-159 (SCTLLATSTWLSGSLHSAVQA). Residues 160–196 (ILTFHLPYCGPNWIQHYLCDAPPILKLACADTSAIET) are Extracellular-facing. The helical transmembrane segment at 197–216 (VIFVTVGIVASGCFVLIVLS) threads the bilayer. Residues 217–236 (YVSIVCSILRIRTSEGKHRA) are Cytoplasmic-facing. Residues 237–257 (FQTCASHCIVVLCFFGPGLFI) form a helical membrane-spanning segment. The Extracellular portion of the chain corresponds to 258 to 268 (YLRPGSRKAVD). The helical transmembrane segment at 269–289 (GVVAVFYTVLTPLLNPVVYTL) threads the bilayer. Over 290–311 (RNKEVKKALLKLKDKVAHSQSK) the chain is Cytoplasmic.

This sequence belongs to the G-protein coupled receptor 1 family.

The protein resides in the cell membrane. Functionally, odorant receptor. This Homo sapiens (Human) protein is Olfactory receptor 10G8 (OR10G8).